Consider the following 177-residue polypeptide: ATP synthase subunit delta (177 aa).

Belongs to the ATPase delta chain family. As to quaternary structure, F-type ATPases have 2 components, F(1) - the catalytic core - and F(0) - the membrane proton channel. F(1) has five subunits: alpha(3), beta(3), gamma(1), delta(1), epsilon(1). F(0) has three main subunits: a(1), b(2) and c(10-14). The alpha and beta chains form an alternating ring which encloses part of the gamma chain. F(1) is attached to F(0) by a central stalk formed by the gamma and epsilon chains, while a peripheral stalk is formed by the delta and b chains.

The protein resides in the cell inner membrane. Its function is as follows. F(1)F(0) ATP synthase produces ATP from ADP in the presence of a proton or sodium gradient. F-type ATPases consist of two structural domains, F(1) containing the extramembraneous catalytic core and F(0) containing the membrane proton channel, linked together by a central stalk and a peripheral stalk. During catalysis, ATP synthesis in the catalytic domain of F(1) is coupled via a rotary mechanism of the central stalk subunits to proton translocation. This protein is part of the stalk that links CF(0) to CF(1). It either transmits conformational changes from CF(0) to CF(1) or is implicated in proton conduction. This Shewanella oneidensis (strain ATCC 700550 / JCM 31522 / CIP 106686 / LMG 19005 / NCIMB 14063 / MR-1) protein is ATP synthase subunit delta.